The primary structure comprises 54 residues: Large ribosomal subunit protein bL33A (54 aa).

It belongs to the bacterial ribosomal protein bL33 family.

This Myxococcus xanthus (strain DK1622) protein is Large ribosomal subunit protein bL33A.